A 389-amino-acid chain; its full sequence is MSAVIVNTVEQCGYFNRGQCQSCRHIQVPMAQQLMAKSLELQQLLKPFVAPSAAIFYPPVTGEATAFRNKAKMVVLGAAHAPVLGIVSPSGEAVSLCDCLLYPSDMQKLLHRLTQFVQQAGIPPYRVDKAKGELKFILLTRSQVRGEYLLRFVLRSHNSIERIERALPTLLAEYPQINVVSVNIQPIHMAILEGGEEIFLTENTRLEERFNDVPLFIRPKSFFQTNPQVAAQLYQTAREWVAEFAPKSLWDLFCGVGGFGLHCATKDIALTGIEIEAEAISCAQISANLMGLEKVQFMALDSTDFAQGKNAADKPDLIIVNPPRRGIGEALCQSLSEFAPKAILYSSCNPKTLAKDLEHIQGYHLTKVQLFDLFPHTDHFEVLAMLVKD.

4 residues coordinate [4Fe-4S] cluster: Cys12, Cys20, Cys23, and Cys99. S-adenosyl-L-methionine-binding residues include Gln224, Phe253, Glu274, and Asn321. Cys348 serves as the catalytic Nucleophile.

This sequence belongs to the class I-like SAM-binding methyltransferase superfamily. RNA M5U methyltransferase family. RlmC subfamily.

The enzyme catalyses uridine(747) in 23S rRNA + S-adenosyl-L-methionine = 5-methyluridine(747) in 23S rRNA + S-adenosyl-L-homocysteine + H(+). Catalyzes the formation of 5-methyl-uridine at position 747 (m5U747) in 23S rRNA. In Shewanella putrefaciens (strain CN-32 / ATCC BAA-453), this protein is 23S rRNA (uracil(747)-C(5))-methyltransferase RlmC.